The chain runs to 113 residues: Transcriptional regulator RamA (113 aa).

Residues 9–107 (DTIVEWIDDN…NLPPGAYRKE (99 aa)) form the HTH araC/xylS-type domain. 2 DNA-binding regions (H-T-H motif) span residues 26 to 47 (DDIA…MQYK) and 74 to 97 (VYDI…TRTF).

Its function is as follows. Transcriptional regulator. Binds to regulatory regions of target genes, including efflux pump operon acrAB and outer membrane protein gene tolC. Represses transcription of genes belonging to the flagellar regulon, including flhD, flhB and fliC; probably thereby leading to repression of motility. Represses expression of the flhDC operon in a post-transcriptional manner. Activates expression of acrAB, perhaps thereby conferring multidrug resistance. Involved in indole- and bile-mediated regulation of acrAB; binding of bile to RamA may contribute to activation of expression of acrAB. Plays a role in regulating virulence in mice. This is Transcriptional regulator RamA from Salmonella typhimurium (strain LT2 / SGSC1412 / ATCC 700720).